Consider the following 104-residue polypeptide: Flagellar hook-basal body complex protein FliE (104 aa).

This sequence belongs to the FliE family.

It is found in the bacterial flagellum basal body. This is Flagellar hook-basal body complex protein FliE from Edwardsiella ictaluri (strain 93-146).